We begin with the raw amino-acid sequence, 127 residues long: Small ribosomal subunit protein uS12 (127 aa).

3-methylthioaspartic acid is present on D89.

It belongs to the universal ribosomal protein uS12 family. As to quaternary structure, part of the 30S ribosomal subunit. Contacts proteins S8 and S17. May interact with IF1 in the 30S initiation complex.

Its function is as follows. With S4 and S5 plays an important role in translational accuracy. In terms of biological role, interacts with and stabilizes bases of the 16S rRNA that are involved in tRNA selection in the A site and with the mRNA backbone. Located at the interface of the 30S and 50S subunits, it traverses the body of the 30S subunit contacting proteins on the other side and probably holding the rRNA structure together. The combined cluster of proteins S8, S12 and S17 appears to hold together the shoulder and platform of the 30S subunit. This Akkermansia muciniphila (strain ATCC BAA-835 / DSM 22959 / JCM 33894 / BCRC 81048 / CCUG 64013 / CIP 107961 / Muc) protein is Small ribosomal subunit protein uS12.